We begin with the raw amino-acid sequence, 115 residues long: SPbeta prophage-derived uncharacterized protein YoqS (115 aa).

This Bacillus subtilis (strain 168) protein is SPbeta prophage-derived uncharacterized protein YoqS (yoqS).